Here is a 347-residue protein sequence, read N- to C-terminus: NADH-ubiquinone oxidoreductase chain 2 (347 aa).

Helical transmembrane passes span 1 to 21, 25 to 45, 55 to 75, 96 to 116, 123 to 143, 145 to 165, 178 to 198, 199 to 219, 237 to 257, 274 to 294, and 324 to 344; these read MNPL…LITA, HWFL…PVLT, AAIK…MAIL, LMIL…FWVP, TLTS…SIMY, IFPV…IMVG, ILAY…PYNP, NITI…FLAL, LTWL…LPPL, GTLI…YFYM, and LLLP…PLTF.

This sequence belongs to the complex I subunit 2 family. In terms of assembly, core subunit of respiratory chain NADH dehydrogenase (Complex I) which is composed of 45 different subunits. Interacts with TMEM242.

The protein localises to the mitochondrion inner membrane. The enzyme catalyses a ubiquinone + NADH + 5 H(+)(in) = a ubiquinol + NAD(+) + 4 H(+)(out). Core subunit of the mitochondrial membrane respiratory chain NADH dehydrogenase (Complex I) which catalyzes electron transfer from NADH through the respiratory chain, using ubiquinone as an electron acceptor. Essential for the catalytic activity and assembly of complex I. This chain is NADH-ubiquinone oxidoreductase chain 2, found in Symphalangus syndactylus (Siamang).